The sequence spans 570 residues: Rho GTPase-activating protein gacEE (570 aa).

One can recognise a PH domain in the interval 127–233; sequence NSDISGVLLK…WVTTINNCID (107 aa). One can recognise a C2 domain in the interval 224–343; the sequence is WVTTINNCID…PNGSEISLWL (120 aa). The Ca(2+) site is built by aspartate 260, aspartate 266, aspartate 312, aspartate 314, and aspartate 320. The region spanning 381–567 is the Rho-GAP domain; sequence NSLEAIVKNR…FVFENSQQIL (187 aa).

Requires Ca(2+) as cofactor.

It is found in the cytoplasm. Rho GTPase-activating protein involved in the signal transduction pathway. In Dictyostelium discoideum (Social amoeba), this protein is Rho GTPase-activating protein gacEE (gacEE).